We begin with the raw amino-acid sequence, 171 residues long: Terminase, small subunit (171 aa).

Belongs to the P23virus small terminase family. Homononamer; forms a ring-like structure through which genomic DNA is translocated into the capsid. Heterodimer with the terminase large subunit; the active complex is probably heterooligomeric.

In terms of biological role, the terminase small subunit binds to the packaging initiation site and regulates the ATPase activity of the terminase large subunit. The terminase lies at a unique vertex of the procapsid and is composed of two subunits, a small terminase subunit involved in viral DNA recognition (packaging sequence), and a large terminase subunit. Both terminase subunits heterooligomerize and are docked on the portal protein to form the packaging machine. This is Terminase, small subunit from Thermus virus P23-45 (Thermus thermophilus phage P23-45).